We begin with the raw amino-acid sequence, 216 residues long: Ribosomal RNA small subunit methyltransferase G (216 aa).

Residues Gly-73, Leu-78, 124 to 125 (AE), and Arg-139 each bind S-adenosyl-L-methionine.

Belongs to the methyltransferase superfamily. RNA methyltransferase RsmG family.

It is found in the cytoplasm. Specifically methylates the N7 position of guanine in position 518 of 16S rRNA. The chain is Ribosomal RNA small subunit methyltransferase G from Paenarthrobacter aurescens (strain TC1).